Consider the following 863-residue polypeptide: Leucine--tRNA ligase (863 aa).

The short motif at 42–52 (PYPSGRLHMGH) is the 'HIGH' region element. The short motif at 622–626 (KMSKS) is the 'KMSKS' region element. Residue Lys625 participates in ATP binding.

This sequence belongs to the class-I aminoacyl-tRNA synthetase family.

It localises to the cytoplasm. The catalysed reaction is tRNA(Leu) + L-leucine + ATP = L-leucyl-tRNA(Leu) + AMP + diphosphate. The protein is Leucine--tRNA ligase of Shewanella frigidimarina (strain NCIMB 400).